Here is a 205-residue protein sequence, read N- to C-terminus: Thymidylate kinase (205 aa).

10–17 (GIDGAGKT) contributes to the ATP binding site.

Belongs to the thymidylate kinase family.

The enzyme catalyses dTMP + ATP = dTDP + ADP. Functionally, phosphorylation of dTMP to form dTDP in both de novo and salvage pathways of dTTP synthesis. The polypeptide is Thymidylate kinase (Nitrosospira multiformis (strain ATCC 25196 / NCIMB 11849 / C 71)).